The chain runs to 291 residues: Quinol oxidase subunit 2 (291 aa).

The signal sequence occupies residues 1-28 (MQLKKAFWKLASLLPLSLLLFLGGCDKK). A run of 2 helical transmembrane segments spans residues 49-69 (SFLL…VILI) and 91-111 (LEII…IPTV).

It belongs to the cytochrome c oxidase subunit 2 family.

Its subcellular location is the cell membrane. It catalyses the reaction 2 a quinol + O2 = 2 a quinone + 2 H2O. Catalyzes quinol oxidation with the concomitant reduction of oxygen to water. Subunit II transfers the electrons from a quinol to the binuclear center of the catalytic subunit I. This chain is Quinol oxidase subunit 2, found in Bacillus cereus (strain ATCC 14579 / DSM 31 / CCUG 7414 / JCM 2152 / NBRC 15305 / NCIMB 9373 / NCTC 2599 / NRRL B-3711).